Reading from the N-terminus, the 787-residue chain is Aconitate hydratase, mitochondrial (787 aa).

A mitochondrion-targeting transit peptide spans 1–33; sequence MISTRLARAGALAPKSRLFLGTRAFATVGDSPL. Residues glutamine 104 and 197-199 contribute to the substrate site; that span reads DSH. Cysteine 390, cysteine 453, and cysteine 456 together coordinate [4Fe-4S] cluster. Residues arginine 479 and arginine 484 each coordinate substrate. Positions 529–559 are disordered; it reads LQPPTGEGLPAKGYDPGRDTYQAPPADRSSV. Substrate contacts are provided by residues arginine 612 and 675-676; that span reads SR.

This sequence belongs to the aconitase/IPM isomerase family. It depends on [4Fe-4S] cluster as a cofactor.

It is found in the mitochondrion. It carries out the reaction citrate = D-threo-isocitrate. It catalyses the reaction (2R)-homocitrate = cis-homoaconitate + H2O. It functions in the pathway carbohydrate metabolism; tricarboxylic acid cycle; isocitrate from oxaloacetate: step 2/2. Its pathway is amino-acid biosynthesis; L-lysine biosynthesis via AAA pathway; L-alpha-aminoadipate from 2-oxoglutarate: step 2/5. Functionally, catalyzes the isomerization of citrate to isocitrate via cis-aconitate, a step in the citric acid cycle. Also catalyzes the reversible dehydration of (R)-homocitrate to cis-homoaconitate, a step in the alpha-aminoadipate pathway for lysine biosynthesis. In Aspergillus fumigatus (strain ATCC MYA-4609 / CBS 101355 / FGSC A1100 / Af293) (Neosartorya fumigata), this protein is Aconitate hydratase, mitochondrial (acoA).